Here is a 475-residue protein sequence, read N- to C-terminus: Ankyrin repeat, SAM and basic leucine zipper domain-containing protein 1 (475 aa).

The segment at 1–25 is disordered; sequence MAAGTLRGLAVAGGGESSDSEDDGW. Residues Ser-17, Ser-18, and Ser-20 each carry the phosphoserine modification. ANK repeat units follow at residues 45-74, 78-107, 110-144, 148-177, 181-210, and 214-243; these read EKNE…NVDS, YGWT…NASF, DKLT…DPNT, RLMT…EVNA, NGYT…NKML, and DGRT…PLEG. The 63-residue stretch at 272–334 folds into the SAM domain; sequence PYTAFGDLEI…KILAALKELE (63 aa).

In terms of assembly, interacts with DDX4, PIWIL1, RANBP9 and TDRD1. As to expression, expressed exclusively in testis and ovary with higher levels in testis.

The protein localises to the cytoplasm. Functionally, plays a central role during spermatogenesis by repressing transposable elements and preventing their mobilization, which is essential for the germline integrity. Acts via the piRNA metabolic process, which mediates the repression of transposable elements during meiosis by forming complexes composed of piRNAs and Piwi proteins and governs the methylation and subsequent repression of transposons. Its association with pi-bodies suggests a participation in the primary piRNAs metabolic process. Required prior to the pachytene stage to facilitate the production of multiple types of piRNAs, including those associated with repeats involved in regulation of retrotransposons. May act by mediating protein-protein interactions during germ cell maturation. This is Ankyrin repeat, SAM and basic leucine zipper domain-containing protein 1 from Mus musculus (Mouse).